Here is a 528-residue protein sequence, read N- to C-terminus: Dihydromonacolin L monooxygenase LovA (528 aa).

At 1–23 (MTVDALTQPHHLLSLAWNDTQQH) the chain is on the cytoplasmic side. The chain crosses the membrane as a helical; Signal-anchor for type II membrane protein span at residues 24–44 (GSWFAPLVTTSAGLLCLLLYL). Topologically, residues 45 to 528 (CSSGRRSELP…DEDIRLPGSL (484 aa)) are lumenal. A glycan (N-linked (GlcNAc...) asparagine) is linked at asparagine 399. Cysteine 465 contributes to the heme binding site.

It belongs to the cytochrome P450 family. Heme is required as a cofactor.

The protein localises to the membrane. It localises to the endoplasmic reticulum membrane. It catalyses the reaction dihydromonacolin L carboxylate + reduced [NADPH--hemoprotein reductase] + O2 = monacolin L carboxylate + oxidized [NADPH--hemoprotein reductase] + 2 H2O + H(+). The enzyme catalyses monacolin L carboxylate + reduced [NADPH--hemoprotein reductase] + O2 = monacolin J carboxylate + oxidized [NADPH--hemoprotein reductase] + H2O + H(+). It participates in polyketide biosynthesis; lovastatin biosynthesis. Dihydromonacolin L monooxygenase; part of the gene cluster that mediates the biosynthesis of lovastatin (also known as mevinolin, mevacor or monacolin K), a hypolipidemic inhibitor of (3S)-hydroxymethylglutaryl-coenzyme A (HMG-CoA) reductase (HMGR). The first step in the biosynthesis of lovastatin is the production of dihydromonacolin L acid by the lovastatin nonaketide synthase lovB and the trans-acting enoyl reductase lovC via condensation of one acetyl-CoA unit and 8 malonyl-CoA units. Dihydromonacolin L acid is released from lovB by the thioesterase lovG. Next, dihydromonacolin L acid is oxidized by the dihydromonacolin L monooxygenase lovA twice to form monacolin J acid. The 2-methylbutyrate moiety of lovastatin is synthesized by the lovastatin diketide synthase lovF via condensation of one acetyl-CoA unit and one malonyl-CoA unit. Finally, the covalent attachment of this moiety to monacolin J acid is catalyzed by the transesterase lovD to yield lovastatin. LovD has broad substrate specificity and can also convert monacolin J to simvastatin using alpha-dimethylbutanoyl-S-methyl-3-mercaptopropionate (DMB-S-MMP) as the thioester acyl donor, and can also catalyze the reverse reaction and function as hydrolase in vitro. LovD has much higher activity with LovF-bound 2-methylbutanoate than with free diketide substrates. This Aspergillus terreus (strain NIH 2624 / FGSC A1156) protein is Dihydromonacolin L monooxygenase LovA.